We begin with the raw amino-acid sequence, 452 residues long: Exodeoxyribonuclease 7 large subunit (452 aa).

Belongs to the XseA family. As to quaternary structure, heterooligomer composed of large and small subunits.

It localises to the cytoplasm. It catalyses the reaction Exonucleolytic cleavage in either 5'- to 3'- or 3'- to 5'-direction to yield nucleoside 5'-phosphates.. In terms of biological role, bidirectionally degrades single-stranded DNA into large acid-insoluble oligonucleotides, which are then degraded further into small acid-soluble oligonucleotides. The protein is Exodeoxyribonuclease 7 large subunit of Bacillus cereus (strain G9842).